The following is a 333-amino-acid chain: Replication factor C subunit 2 (333 aa).

An N-acetylalanine modification is found at alanine 2. Residue glycine 55–threonine 62 coordinates ATP.

It belongs to the activator 1 small subunits family. Heterotetramer of subunits RFC2, RFC3, RFC4 and RFC5 that can form a complex with RFC1.

The protein resides in the nucleus. Functionally, may be involved in DNA replication and thus regulate cell proliferation. The sequence is that of Replication factor C subunit 2 (RFC2) from Arabidopsis thaliana (Mouse-ear cress).